Reading from the N-terminus, the 192-residue chain is Fe/S biogenesis protein NfuA (192 aa).

The [4Fe-4S] cluster site is built by cysteine 149 and cysteine 152.

This sequence belongs to the NfuA family. In terms of assembly, homodimer. [4Fe-4S] cluster serves as cofactor.

Its function is as follows. Involved in iron-sulfur cluster biogenesis. Binds a 4Fe-4S cluster, can transfer this cluster to apoproteins, and thereby intervenes in the maturation of Fe/S proteins. Could also act as a scaffold/chaperone for damaged Fe/S proteins. The sequence is that of Fe/S biogenesis protein NfuA from Shewanella frigidimarina (strain NCIMB 400).